The following is a 541-amino-acid chain: Glucans biosynthesis protein D (541 aa).

The tat-type signal signal peptide spans 1–29 (MHRRNLLKASMAIAAYTGLSASGLLAAQA).

It belongs to the OpgD/OpgG family. In terms of processing, predicted to be exported by the Tat system. The position of the signal peptide cleavage has not been experimentally proven.

It is found in the periplasm. The protein operates within glycan metabolism; osmoregulated periplasmic glucan (OPG) biosynthesis. Functionally, probably involved in the control of the structural glucose backbone of osmoregulated periplasmic glucans (OPGs). This is Glucans biosynthesis protein D from Pseudomonas fluorescens (strain SBW25).